The sequence spans 367 residues: ABI gene family member 3 (367 aa).

Residues 36 to 64 adopt a coiled-coil conformation; the sequence is CEDNYLQATDKRKALEETMAFTTQALASV. The interval 163–273 is disordered; sequence LSRTGTLSRK…LEVSQPPLEA (111 aa). Residues 206-225 are compositionally biased toward low complexity; it reads SAASSASSLASAGSAEGASG. Phosphoserine is present on residues Ser-216 and Ser-219. Residues 236 to 264 are compositionally biased toward pro residues; it reads ATPPPPPVAPVTPPPPPLSAEVFLPPPPL. Positions 309 to 367 constitute an SH3 domain; it reads SYLEKVVTLYPYTRQKDNELSFSEGTVICVTRRYSDGWCEGVSSEGTGFFPGNYVEPSC. The residue at position 343 (Ser-343) is a Phosphoserine.

Belongs to the ABI family. In terms of assembly, may interact with PAK1 and PAK2. Probably interacts with TARSH.

It is found in the cytoplasm. In terms of biological role, inhibits ectopic tumor cell metastasis of SRD cells. In vitro, reduces cell motility. The protein is ABI gene family member 3 (Abi3) of Mus musculus (Mouse).